The sequence spans 187 residues: Elongation factor P (187 aa).

Belongs to the elongation factor P family.

The protein resides in the cytoplasm. The protein operates within protein biosynthesis; polypeptide chain elongation. Functionally, involved in peptide bond synthesis. Stimulates efficient translation and peptide-bond synthesis on native or reconstituted 70S ribosomes in vitro. Probably functions indirectly by altering the affinity of the ribosome for aminoacyl-tRNA, thus increasing their reactivity as acceptors for peptidyl transferase. The polypeptide is Elongation factor P (efp) (Mycobacterium bovis (strain ATCC BAA-935 / AF2122/97)).